A 183-amino-acid chain; its full sequence is Somatotropin (183 aa).

A Zn(2+)-binding site is contributed by histidine 19. Residues glutamate 38–glutamine 67 are disordered. Residues serine 46–threonine 56 show a composition bias toward polar residues. A disulfide bridge links cysteine 52 with cysteine 156. Glutamate 165 serves as a coordination point for Zn(2+). A disulfide bridge links cysteine 173 with cysteine 181.

The protein belongs to the somatotropin/prolactin family.

The protein localises to the secreted. In terms of biological role, growth hormone plays an important role in growth control and is involved in the regulation of several anabolic processes. Implicated as an osmoregulatory substance important for seawater adaptation. This is Somatotropin (gh) from Prionace glauca (Blue shark).